The chain runs to 131 residues: Protein Bouncer (131 aa).

An N-terminal signal peptide occupies residues 1 to 26 (MGSLRTRQLFHAALLWLCLPLPLLLC). 4 disulfides stabilise this stretch: Cys-31-Cys-56, Cys-50-Cys-74, Cys-80-Cys-99, and Cys-100-Cys-105. A UPAR/Ly6 domain is found at 31–106 (CYYSPVLEKE…YSCCDWPYCN (76 aa)). Asn-65 carries an N-linked (GlcNAc...) asparagine glycan. Asn-106 carries GPI-anchor amidated asparagine lipidation. Positions 107 to 131 (RAVALEPLTAMLVAAAVVACSFCLT) are cleaved as a propeptide — removed in mature form.

This sequence belongs to the SPACA4/bouncer family. Interacts with spermatocyte complex composed of izumo1, spaca6 and tmem81. As to expression, expressed in oocytes. Not expressed in testis.

The protein localises to the cell membrane. Functionally, oocyte-expressed fertilization factor that mediates sperm-egg binding and is essential for sperm entry into the egg. Necessary and sufficient to mediate species-specific gamete recognition and fertilization, which is essential for vertebrate species performing external fertilization. External fertilization cannot guarantee that only conspecific sperm reaches the egg by precopulatory mate choice: proteins such as Bouncer can therefore support the selection of conspecific sperm. The polypeptide is Protein Bouncer (Oryzias latipes (Japanese rice fish)).